A 351-amino-acid chain; its full sequence is Histidinol-phosphate aminotransferase (351 aa).

Lysine 213 carries the N6-(pyridoxal phosphate)lysine modification.

Belongs to the class-II pyridoxal-phosphate-dependent aminotransferase family. Histidinol-phosphate aminotransferase subfamily. In terms of assembly, homodimer. It depends on pyridoxal 5'-phosphate as a cofactor.

It catalyses the reaction L-histidinol phosphate + 2-oxoglutarate = 3-(imidazol-4-yl)-2-oxopropyl phosphate + L-glutamate. The protein operates within amino-acid biosynthesis; L-histidine biosynthesis; L-histidine from 5-phospho-alpha-D-ribose 1-diphosphate: step 7/9. The chain is Histidinol-phosphate aminotransferase from Thermoanaerobacter sp. (strain X514).